The following is a 113-amino-acid chain: Large ribosomal subunit protein uL22 (113 aa).

This sequence belongs to the universal ribosomal protein uL22 family. Part of the 50S ribosomal subunit.

In terms of biological role, this protein binds specifically to 23S rRNA; its binding is stimulated by other ribosomal proteins, e.g. L4, L17, and L20. It is important during the early stages of 50S assembly. It makes multiple contacts with different domains of the 23S rRNA in the assembled 50S subunit and ribosome. Functionally, the globular domain of the protein is located near the polypeptide exit tunnel on the outside of the subunit, while an extended beta-hairpin is found that lines the wall of the exit tunnel in the center of the 70S ribosome. In Trichlorobacter lovleyi (strain ATCC BAA-1151 / DSM 17278 / SZ) (Geobacter lovleyi), this protein is Large ribosomal subunit protein uL22.